The chain runs to 330 residues: Tryptophan--tRNA ligase (330 aa).

ATP contacts are provided by residues 10 to 12 (QAT) and 18 to 19 (GN). The 'HIGH' region motif lies at 11–19 (ATGSLHLGN). Asp-134 contributes to the L-tryptophan binding site. ATP contacts are provided by residues 146–148 (GED), Ile-186, and 195–199 (KMSKS). A 'KMSKS' region motif is present at residues 195-199 (KMSKS).

This sequence belongs to the class-I aminoacyl-tRNA synthetase family. In terms of assembly, homodimer.

The protein resides in the cytoplasm. The enzyme catalyses tRNA(Trp) + L-tryptophan + ATP = L-tryptophyl-tRNA(Trp) + AMP + diphosphate + H(+). Functionally, catalyzes the attachment of tryptophan to tRNA(Trp). The chain is Tryptophan--tRNA ligase from Rickettsia conorii (strain ATCC VR-613 / Malish 7).